The primary structure comprises 420 residues: uncharacterized protein (420 aa).

Disordered regions lie at residues 84–103 and 122–211; these read RSQA…GTSE and SMNN…NKKS. Positions 85–103 are enriched in polar residues; that stretch reads SQANSESTPPEHTWSGTSE. The segment covering 184 to 199 has biased composition (basic and acidic residues); it reads SMTDQEVEQRRKEANK. 2 coiled-coil regions span residues 265 to 310 and 345 to 374; these read TEKE…TATN and LQFK…NFKE. The segment covering 399–408 has biased composition (polar residues); sequence KTSSPKTSIA. The disordered stretch occupies residues 399 to 420; the sequence is KTSSPKTSIAGSHRRSTRSSEN. Residues 410–420 show a composition bias toward basic residues; that stretch reads SHRRSTRSSEN.

This is an uncharacterized protein from Caenorhabditis elegans.